Consider the following 308-residue polypeptide: Probable pyridoxal 5'-phosphate synthase subunit pdx-1 (308 aa).

Residue D30 participates in D-ribose 5-phosphate binding. The active-site Schiff-base intermediate with D-ribose 5-phosphate is K87. Residue G159 participates in D-ribose 5-phosphate binding. Residue R171 coordinates D-glyceraldehyde 3-phosphate. D-ribose 5-phosphate contacts are provided by residues G224 and 245–246 (GS).

The protein belongs to the PdxS/SNZ family.

The enzyme catalyses aldehydo-D-ribose 5-phosphate + D-glyceraldehyde 3-phosphate + L-glutamine = pyridoxal 5'-phosphate + L-glutamate + phosphate + 3 H2O + H(+). It participates in cofactor biosynthesis; pyridoxal 5'-phosphate biosynthesis. Its function is as follows. Catalyzes the formation of pyridoxal 5'-phosphate from ribose 5-phosphate (RBP), glyceraldehyde 3-phosphate (G3P) and ammonia. The ammonia is provided by pdx-2. Can also use ribulose 5-phosphate and dihydroxyacetone phosphate as substrates, resulting from enzyme-catalyzed isomerization of RBP and G3P, respectively. Also plays an indirect role in resistance to singlet oxygen-generating photosensitizers. The chain is Probable pyridoxal 5'-phosphate synthase subunit pdx-1 (pdx-1) from Neurospora crassa (strain ATCC 24698 / 74-OR23-1A / CBS 708.71 / DSM 1257 / FGSC 987).